The following is an 879-amino-acid chain: Phosphoenolpyruvate carboxylase (879 aa).

Active-site residues include histidine 138 and lysine 545.

This sequence belongs to the PEPCase type 1 family. Requires Mg(2+) as cofactor.

It catalyses the reaction oxaloacetate + phosphate = phosphoenolpyruvate + hydrogencarbonate. Its function is as follows. Forms oxaloacetate, a four-carbon dicarboxylic acid source for the tricarboxylic acid cycle. The polypeptide is Phosphoenolpyruvate carboxylase (Haemophilus influenzae (strain PittEE)).